The chain runs to 114 residues: DNA-directed RNA polymerase subunit omega (114 aa).

Belongs to the RNA polymerase subunit omega family. The RNAP catalytic core consists of 2 alpha, 1 beta, 1 beta' and 1 omega subunit. When a sigma factor is associated with the core the holoenzyme is formed, which can initiate transcription.

The enzyme catalyses RNA(n) + a ribonucleoside 5'-triphosphate = RNA(n+1) + diphosphate. In terms of biological role, promotes RNA polymerase assembly. Latches the N- and C-terminal regions of the beta' subunit thereby facilitating its interaction with the beta and alpha subunits. The polypeptide is DNA-directed RNA polymerase subunit omega (Erythrobacter litoralis (strain HTCC2594)).